Reading from the N-terminus, the 396-residue chain is Chaperone protein DnaJ (396 aa).

The 66-residue stretch at 6 to 71 (DYYEVLEVTK…DKRSRYDQFG (66 aa)) folds into the J domain. A CR-type zinc finger spans residues 154 to 236 (GVEKKFKLKK…CGGDGIVYGE (83 aa)). Cys167, Cys170, Cys184, Cys187, Cys210, Cys213, Cys224, and Cys227 together coordinate Zn(2+). CXXCXGXG motif repeat units lie at residues 167 to 174 (CNHCHGTG), 184 to 191 (CPTCKGSG), 210 to 217 (CPTCNGEG), and 224 to 231 (CKECGGDG).

The protein belongs to the DnaJ family. As to quaternary structure, homodimer. Zn(2+) is required as a cofactor.

Its subcellular location is the cytoplasm. In terms of biological role, participates actively in the response to hyperosmotic and heat shock by preventing the aggregation of stress-denatured proteins and by disaggregating proteins, also in an autonomous, DnaK-independent fashion. Unfolded proteins bind initially to DnaJ; upon interaction with the DnaJ-bound protein, DnaK hydrolyzes its bound ATP, resulting in the formation of a stable complex. GrpE releases ADP from DnaK; ATP binding to DnaK triggers the release of the substrate protein, thus completing the reaction cycle. Several rounds of ATP-dependent interactions between DnaJ, DnaK and GrpE are required for fully efficient folding. Also involved, together with DnaK and GrpE, in the DNA replication of plasmids through activation of initiation proteins. This Bacteroides thetaiotaomicron (strain ATCC 29148 / DSM 2079 / JCM 5827 / CCUG 10774 / NCTC 10582 / VPI-5482 / E50) protein is Chaperone protein DnaJ.